Consider the following 387-residue polypeptide: Alanine racemase (387 aa).

Catalysis depends on Lys38, which acts as the Proton acceptor; specific for D-alanine. Lys38 carries the N6-(pyridoxal phosphate)lysine modification. A substrate-binding site is contributed by Arg136. Tyr267 acts as the Proton acceptor; specific for L-alanine in catalysis. Residue Met315 participates in substrate binding.

Belongs to the alanine racemase family. It depends on pyridoxal 5'-phosphate as a cofactor.

The enzyme catalyses L-alanine = D-alanine. It participates in amino-acid biosynthesis; D-alanine biosynthesis; D-alanine from L-alanine: step 1/1. In terms of biological role, catalyzes the interconversion of L-alanine and D-alanine. May also act on other amino acids. In Clostridium novyi (strain NT), this protein is Alanine racemase (alr).